Here is a 525-residue protein sequence, read N- to C-terminus: MSWHPQYRSSKFRHVFGKPASKENCYDSVPITRSVHDNHFCAVNPHFIAVVTECAGGGAFLVIPLHQTGKLDPHYPKVCGHRGNVLDVKWNPFDDFEIASCSEDATIKIWSIPKQLLTRNLTAYRKELVGHARRVGLVEWHPTAANILFSAGYDYKVMIWNLDTKESVITSPMSTISCHQDVILSMSFNTNGSLLATTCKDRKIRVIDPRAGTVLQEASYKGHRASKVLFLGNLKKLMSTGTSRWNNRQVALWDQDNLSVPLMEEDLDGSSGVLFPFYDADTSMLYVVGKGDGNIRYYEVSADKPHLSYLTEYRSYNPQKGIGVMPKRGLDVSSCEIFRFYKLITTKSLIEPISMIVPRRSESYQEDIYPPTAGAQPSLTAQEWLSGMNRDPILVSLRPGSELLRPHPLPAERPIFNSMAPASPRLLNQTEKLAAEDGWRSSSLLEEKMPRWAAEHRLEEKKTWLTNGFDVFECPPPKTENELLQMFYRQQEEIRRLRELLTQREVQAKQLELEIKNLRMGSEQL.

WD repeat units lie at residues Asn24–Leu71, Asp72–Thr122, Ala123–Thr170, Ser171–Val214, Leu215–Ser259, Val260–Pro305, and His306–Lys342. Positions Gln485–Gln524 form a coiled coil.

This sequence belongs to the WD repeat coronin family. In terms of assembly, binds actin. Component of the N-Cor repressor complex, at least composed of NCOR1, NCOR2, HDAC3, TBL1X, TBL1R, CORO2A and GPS2.

This is Coronin-2A (CORO2A) from Homo sapiens (Human).